The sequence spans 644 residues: Exoribonuclease 2 (644 aa).

Residues 189 to 516 (REDLTALNFV…NHRLLKAIIA (328 aa)) enclose the RNB domain. The 83-residue stretch at 561 to 643 (DERFNAEIID…ETRSVIARPA (83 aa)) folds into the S1 motif domain.

Belongs to the RNR ribonuclease family. RNase II subfamily.

Its subcellular location is the cytoplasm. It carries out the reaction Exonucleolytic cleavage in the 3'- to 5'-direction to yield nucleoside 5'-phosphates.. Its function is as follows. Involved in mRNA degradation. Hydrolyzes single-stranded polyribonucleotides processively in the 3' to 5' direction. This Serratia proteamaculans (strain 568) protein is Exoribonuclease 2.